The chain runs to 238 residues: MEKGQMLYEGKAKKVYTTDQEGIYWVEYKDDATAFNGEKKGTIGDKGIVNNRLSALLFEVLEKTGIPTHFIELLNDREMLVRKLEMIPLEVVVRNIAAGSLAKRLGVAEGLNLSRPVVELYYKDDALGDPFVNESHSLAMGWAEQSDLKEIQELGLKINGELQKILDQAGIILVDFKLEFGKAEGKVYLGDEISPDTCRFWDKETQEKLDKDRFRRDLGKVEEAYAEVYRRVKEVLKD.

The protein belongs to the SAICAR synthetase family.

It catalyses the reaction 5-amino-1-(5-phospho-D-ribosyl)imidazole-4-carboxylate + L-aspartate + ATP = (2S)-2-[5-amino-1-(5-phospho-beta-D-ribosyl)imidazole-4-carboxamido]succinate + ADP + phosphate + 2 H(+). It participates in purine metabolism; IMP biosynthesis via de novo pathway; 5-amino-1-(5-phospho-D-ribosyl)imidazole-4-carboxamide from 5-amino-1-(5-phospho-D-ribosyl)imidazole-4-carboxylate: step 1/2. The protein is Phosphoribosylaminoimidazole-succinocarboxamide synthase of Desulfitobacterium hafniense (strain DSM 10664 / DCB-2).